The sequence spans 345 residues: MIKVGIIGSTGYIGQQLVWLLKIHPNVEIVFLSSYNYAGYSFNSVYNNYKGFVETTCINIKEVKTRLKDVDIVFMALPHGKSFEMVKYSLNLGIKVIDLSGDFRLKDSKEYEKWYKIEHPLKEVLKYSVYGLPELFRKDIKKASLICNPGCYATASILALAPLIKLDLVEKGSIIVDAKSGVSGAGRALKTQSLYCECNETMKAYGIGNHRHTPEIEQELSRFCKEDIKLTFTPHLVPINRGIFATCYATLKKDLNKVQLEEAYEKFYENDYFIKVMKELVEVKWIKNSNFCNMNVNIDERTNKVIVSSVIDNLMKGAASQAVQNMNILFGIDEKTGLNIPSMMI.

The active site involves C151.

It belongs to the NAGSA dehydrogenase family. Type 1 subfamily.

The protein resides in the cytoplasm. It carries out the reaction N-acetyl-L-glutamate 5-semialdehyde + phosphate + NADP(+) = N-acetyl-L-glutamyl 5-phosphate + NADPH + H(+). Its pathway is amino-acid biosynthesis; L-arginine biosynthesis; N(2)-acetyl-L-ornithine from L-glutamate: step 3/4. Functionally, catalyzes the NADPH-dependent reduction of N-acetyl-5-glutamyl phosphate to yield N-acetyl-L-glutamate 5-semialdehyde. This chain is N-acetyl-gamma-glutamyl-phosphate reductase, found in Clostridium novyi (strain NT).